The sequence spans 230 residues: Sperm-associated antigen 7 homolog (230 aa).

The segment at 1 to 45 (MADLLGSILSSMEKPPTVHDQESRRKAREQAARLKKLEEDERRKK) is disordered. Over residues 16–45 (PTVHDQESRRKAREQAARLKKLEEDERRKK) the composition is skewed to basic and acidic residues. Residues 46-109 (AEFRKKMEKE…ESRYVMLFKK (64 aa)) enclose the R3H domain. Over residues 119 to 144 (EAYRKGEEWDPQKAEERRRLKEKAAL) the composition is skewed to basic and acidic residues. Disordered stretches follow at residues 119–169 (EAYR…KYSH) and 185–230 (ANRA…GSSV). Serine 158 carries the post-translational modification Phosphoserine. The segment covering 196-211 (NKRDTRSIEEAMNEIR) has biased composition (basic and acidic residues).

The sequence is that of Sperm-associated antigen 7 homolog (spag7) from Danio rerio (Zebrafish).